Consider the following 143-residue polypeptide: Anti-sigma F factor (143 aa).

It belongs to the anti-sigma-factor family.

It catalyses the reaction L-seryl-[protein] + ATP = O-phospho-L-seryl-[protein] + ADP + H(+). It carries out the reaction L-threonyl-[protein] + ATP = O-phospho-L-threonyl-[protein] + ADP + H(+). Functionally, binds to sigma F and blocks its ability to form an RNA polymerase holoenzyme (E-sigma F). Phosphorylates SpoIIAA on a serine residue. This phosphorylation may enable SpoIIAA to act as an anti-anti-sigma factor that counteracts SpoIIAB and thus releases sigma F from inhibition. The protein is Anti-sigma F factor of Thermoanaerobacter pseudethanolicus (strain ATCC 33223 / 39E) (Clostridium thermohydrosulfuricum).